The following is a 217-amino-acid chain: Imidazole glycerol phosphate synthase subunit HisH (217 aa).

In terms of domain architecture, Glutamine amidotransferase type-1 spans 6–214 (QIAVVDYDMG…VTQVAAAQLQ (209 aa)). The Nucleophile role is filled by C84. Active-site residues include H189 and E191.

Heterodimer of HisH and HisF.

It is found in the cytoplasm. The catalysed reaction is 5-[(5-phospho-1-deoxy-D-ribulos-1-ylimino)methylamino]-1-(5-phospho-beta-D-ribosyl)imidazole-4-carboxamide + L-glutamine = D-erythro-1-(imidazol-4-yl)glycerol 3-phosphate + 5-amino-1-(5-phospho-beta-D-ribosyl)imidazole-4-carboxamide + L-glutamate + H(+). It catalyses the reaction L-glutamine + H2O = L-glutamate + NH4(+). Its pathway is amino-acid biosynthesis; L-histidine biosynthesis; L-histidine from 5-phospho-alpha-D-ribose 1-diphosphate: step 5/9. In terms of biological role, IGPS catalyzes the conversion of PRFAR and glutamine to IGP, AICAR and glutamate. The HisH subunit catalyzes the hydrolysis of glutamine to glutamate and ammonia as part of the synthesis of IGP and AICAR. The resulting ammonia molecule is channeled to the active site of HisF. In Synechococcus sp. (strain ATCC 27144 / PCC 6301 / SAUG 1402/1) (Anacystis nidulans), this protein is Imidazole glycerol phosphate synthase subunit HisH.